Here is a 175-residue protein sequence, read N- to C-terminus: ATP synthase subunit delta (175 aa).

The protein belongs to the ATPase delta chain family. F-type ATPases have 2 components, F(1) - the catalytic core - and F(0) - the membrane proton channel. F(1) has five subunits: alpha(3), beta(3), gamma(1), delta(1), epsilon(1). F(0) has three main subunits: a(1), b(2) and c(10-14). The alpha and beta chains form an alternating ring which encloses part of the gamma chain. F(1) is attached to F(0) by a central stalk formed by the gamma and epsilon chains, while a peripheral stalk is formed by the delta and b chains.

Its subcellular location is the cell inner membrane. Functionally, f(1)F(0) ATP synthase produces ATP from ADP in the presence of a proton or sodium gradient. F-type ATPases consist of two structural domains, F(1) containing the extramembraneous catalytic core and F(0) containing the membrane proton channel, linked together by a central stalk and a peripheral stalk. During catalysis, ATP synthesis in the catalytic domain of F(1) is coupled via a rotary mechanism of the central stalk subunits to proton translocation. Its function is as follows. This protein is part of the stalk that links CF(0) to CF(1). It either transmits conformational changes from CF(0) to CF(1) or is implicated in proton conduction. The sequence is that of ATP synthase subunit delta from Xanthomonas euvesicatoria pv. vesicatoria (strain 85-10) (Xanthomonas campestris pv. vesicatoria).